Consider the following 296-residue polypeptide: NADH-cytochrome b5 reductase 2 (296 aa).

The chain crosses the membrane as a helical span at residues 2–24; it reads LVALAAIGVTVLLFLIKALGSGA. One can recognise an FAD-binding FR-type domain in the interval 35–147; it reads NAKYPLPLIE…RGPNGLLVYK (113 aa). FAD contacts are provided by residues 127-142 and 166-201; these read DSLK…GPNG and VAKH…KCYL.

This sequence belongs to the flavoprotein pyridine nucleotide cytochrome reductase family. It depends on FAD as a cofactor.

The protein resides in the membrane. The catalysed reaction is 2 Fe(III)-[cytochrome b5] + NADH = 2 Fe(II)-[cytochrome b5] + NAD(+) + H(+). Its function is as follows. NADH-cytochrome b5 reductases are involved in desaturation and elongation of fatty acids, cholesterol biosynthesis and drug metabolism. In Xenopus laevis (African clawed frog), this protein is NADH-cytochrome b5 reductase 2 (cyb5r2).